A 579-amino-acid chain; its full sequence is CTP synthase 1 (579 aa).

Positions 305–559 (KIALVGKYTN…LGLVAASAGI (255 aa)) constitute a Glutamine amidotransferase type-1 domain. C404 serves as the catalytic For GATase activity. Residue K422 forms a Glycyl lysine isopeptide (Lys-Gly) (interchain with G-Cter in ubiquitin) linkage. Active-site for GATase activity residues include H535 and E537.

This sequence belongs to the CTP synthase family. Homodimer. Oligomerizes to a tetramer in the presence of its substrates UTP and ATP.

It carries out the reaction UTP + L-glutamine + ATP + H2O = CTP + L-glutamate + ADP + phosphate + 2 H(+). Its pathway is pyrimidine metabolism; CTP biosynthesis via de novo pathway; CTP from UDP: step 2/2. Its activity is regulated as follows. Activated by GTP and inhibited by CTP. Its function is as follows. Catalyzes the ATP-dependent amination of UTP to CTP with either L-glutamine or ammonia as the source of nitrogen. The chain is CTP synthase 1 (URA7) from Saccharomyces cerevisiae (strain ATCC 204508 / S288c) (Baker's yeast).